The sequence spans 396 residues: Methylthioribose kinase (396 aa).

ATP-binding positions include N44, K61, and 115–117; that span reads EDL. D233 is a binding site for substrate. 250–252 serves as a coordination point for ATP; that stretch reads DPE. R340 contacts substrate.

Belongs to the methylthioribose kinase family. In terms of assembly, homodimer.

It catalyses the reaction 5-(methylsulfanyl)-D-ribose + ATP = 5-(methylsulfanyl)-alpha-D-ribose 1-phosphate + ADP + H(+). It participates in amino-acid biosynthesis; L-methionine biosynthesis via salvage pathway; S-methyl-5-thio-alpha-D-ribose 1-phosphate from S-methyl-5'-thioadenosine (hydrolase route): step 2/2. Functionally, catalyzes the phosphorylation of methylthioribose into methylthioribose-1-phosphate. The chain is Methylthioribose kinase from Geobacillus thermodenitrificans (strain NG80-2).